The chain runs to 503 residues: Glutamyl-tRNA(Gln) amidotransferase subunit A (503 aa).

Active-site charge relay system residues include K79 and S154. Catalysis depends on S178, which acts as the Acyl-ester intermediate.

This sequence belongs to the amidase family. GatA subfamily. In terms of assembly, heterotrimer of A, B and C subunits.

The enzyme catalyses L-glutamyl-tRNA(Gln) + L-glutamine + ATP + H2O = L-glutaminyl-tRNA(Gln) + L-glutamate + ADP + phosphate + H(+). Its function is as follows. Allows the formation of correctly charged Gln-tRNA(Gln) through the transamidation of misacylated Glu-tRNA(Gln) in organisms which lack glutaminyl-tRNA synthetase. The reaction takes place in the presence of glutamine and ATP through an activated gamma-phospho-Glu-tRNA(Gln). This is Glutamyl-tRNA(Gln) amidotransferase subunit A from Agathobacter rectalis (strain ATCC 33656 / DSM 3377 / JCM 17463 / KCTC 5835 / VPI 0990) (Eubacterium rectale).